Here is an 88-residue protein sequence, read N- to C-terminus: ATP synthase F(0) complex subunit f, mitochondrial (88 aa).

An N-acetylalanine modification is found at Ala2. Ser3 is modified (phosphoserine). An N6-acetyllysine modification is found at Lys16. Residues 62 to 79 form a helical membrane-spanning segment; it reads MVLAAYVVFSYCISYKEL.

The protein belongs to the ATPase F chain family. In terms of assembly, component of the ATP synthase complex composed at least of ATP5F1A/subunit alpha, ATP5F1B/subunit beta, ATP5MC1/subunit c (homooctomer), MT-ATP6/subunit a, MT-ATP8/subunit 8, ATP5ME/subunit e, ATP5MF/subunit f, ATP5MG/subunit g, ATP5MK/subunit k, ATP5MJ/subunit j, ATP5F1C/subunit gamma, ATP5F1D/subunit delta, ATP5F1E/subunit epsilon, ATP5PF/subunit F6, ATP5PB/subunit b, ATP5PD/subunit d, ATP5PO/subunit OSCP. ATP synthase complex consists of a soluble F(1) head domain (subunits alpha(3) and beta(3)) - the catalytic core - and a membrane F(0) domain - the membrane proton channel (subunits c, a, 8, e, f, g, k and j). These two domains are linked by a central stalk (subunits gamma, delta, and epsilon) rotating inside the F1 region and a stationary peripheral stalk (subunits F6, b, d, and OSCP).

It localises to the mitochondrion. It is found in the mitochondrion inner membrane. Functionally, subunit f, of the mitochondrial membrane ATP synthase complex (F(1)F(0) ATP synthase or Complex V) that produces ATP from ADP in the presence of a proton gradient across the membrane which is generated by electron transport complexes of the respiratory chain. ATP synthase complex consist of a soluble F(1) head domain - the catalytic core - and a membrane F(1) domain - the membrane proton channel. These two domains are linked by a central stalk rotating inside the F(1) region and a stationary peripheral stalk. During catalysis, ATP synthesis in the catalytic domain of F(1) is coupled via a rotary mechanism of the central stalk subunits to proton translocation. In vivo, can only synthesize ATP although its ATP hydrolase activity can be activated artificially in vitro. Part of the complex F(0) domain. This Rattus norvegicus (Rat) protein is ATP synthase F(0) complex subunit f, mitochondrial.